The sequence spans 495 residues: Homeobox protein ceh-21 (495 aa).

A compositionally biased stretch (polar residues) spans 1-14; sequence MSQQFQASSGTGSA. 2 disordered regions span residues 1–24 and 89–267; these read MSQQ…TEHE and TAES…PGGE. The span at 106 to 120 shows a compositional bias: basic and acidic residues; that stretch reads LEEKSDKSSDGDGTS. Positions 132 to 145 are enriched in acidic residues; it reads NETEEDHEEKEDEA. Positions 149–162 are enriched in basic and acidic residues; that stretch reads SRRESTRLKRKLLE. 2 stretches are compositionally biased toward polar residues: residues 163 to 179 and 199 to 217; these read SQKT…ASSK and TPEQ…TVRA. Low complexity predominate over residues 218-233; sequence SSTCGSSVSSTSTVSS. The segment covering 242-254 has biased composition (basic and acidic residues); it reads RATETPKLEELAP. The CUT DNA-binding region spans 284–370; the sequence is NAQIGDDEEL…VRRALCFLPK (87 aa). The homeobox DNA-binding region spans 389 to 449; the sequence is KTVKVIRLTF…MNSRRRLRID (61 aa). The interval 450-473 is disordered; sequence QQISRSSRSTGNGADTEDELDEED. Positions 464–473 are enriched in acidic residues; sequence DTEDELDEED.

This sequence belongs to the CUT homeobox family.

The protein localises to the nucleus. In terms of biological role, probable DNA-binding regulatory protein involved in cell-fate specification. In Caenorhabditis elegans, this protein is Homeobox protein ceh-21 (ceh-21).